The primary structure comprises 484 residues: Notoamide biosynthesis transcriptional activator notL (484 aa).

The zn(2)-C6 fungal-type DNA-binding region spans 33 to 60 (CQSCATSKIKCPKEKTSCSKCQARGIEC). Disordered stretches follow at residues 70–154 (RRRE…NNSV) and 363–387 (GGGE…QMRP). Residues 76-122 (TGHPTSCTSTSTTANSSSSSSRSSNSSSSSSTSPPSSSSSLSSNPEP) show a composition bias toward low complexity. The span at 123–133 (TSDKDLPRPRS) shows a compositional bias: basic and acidic residues. 2 stretches are compositionally biased toward polar residues: residues 139 to 154 (ANST…NNSV) and 368 to 378 (DTGQRPATSMI).

It localises to the nucleus. In terms of biological role, transcription factor that probably regulates the expression of the gene cluster that mediates the biosynthesis of notoamide, a fungal indole alkaloid that belongs to a family of natural products containing a characteristic bicyclo[2.2.2]diazaoctane core. The chain is Notoamide biosynthesis transcriptional activator notL from Aspergillus sp. (strain MF297-2).